Here is a 64-residue protein sequence, read N- to C-terminus: Ferredoxin-2 (64 aa).

The 4Fe-4S ferredoxin-type domain maps to 2–29 (RIHVDQDKCCGAGSCVLAAPDVFDQREE). Positions 10, 16, and 55 each coordinate [3Fe-4S] cluster.

Requires [3Fe-4S] cluster as cofactor.

Its function is as follows. Electron transport protein for the cytochrome P-450-SU2 system. This chain is Ferredoxin-2 (subB), found in Streptomyces griseolus.